Reading from the N-terminus, the 270-residue chain is Tetraspanin-14 (270 aa).

Over 1–17 (MHYYRYSNAEVSCWYKY) the chain is Cytoplasmic. A helical transmembrane segment spans residues 18 to 38 (LLFSYNIVFWLAGVVFLGVGL). Over 39–61 (WAWSEKGVLSDLTKVTRLHGIDP) the chain is Extracellular. Residues 62-82 (VVLVLMVGVVMFTLGFAGCVG) form a helical membrane-spanning segment. Over 83 to 92 (ALRENICLLK) the chain is Cytoplasmic. The chain crosses the membrane as a helical span at residues 93–113 (FFCGAIVLIFFLELAVAVLAF). The Extracellular segment spans residues 114-232 (LFQDWVRDRF…QALEGWLPRN (119 aa)). Positions 114 to 232 (LFQDWVRDRF…QALEGWLPRN (119 aa)) are necessary and sufficient for interaction with ADAM10. 4 disulfides stabilise this stretch: cysteine 153–cysteine 221, cysteine 154–cysteine 186, cysteine 170–cysteine 180, and cysteine 187–cysteine 200. Asparagine 169 is a glycosylation site (N-linked (GlcNAc...) asparagine). A helical transmembrane segment spans residues 233-253 (IYIVAGVFIAISLLQIFGIFL). Topologically, residues 254 to 270 (ARTLISDIEAVKAGHHF) are cytoplasmic.

This sequence belongs to the tetraspanin (TM4SF) family. Interacts with ADAM10; the interaction promotes ADAM10 maturation and cell surface expression.

The protein resides in the cell membrane. Its function is as follows. Part of TspanC8 subgroup, composed of 6 members that interact with the transmembrane metalloprotease ADAM10. This interaction is required for ADAM10 exit from the endoplasmic reticulum and for enzymatic maturation and trafficking to the cell surface as well as substrate specificity. Different TspanC8/ADAM10 complexes have distinct substrates. Negatively regulates ADAM10-mediated cleavage of GP6. Promotes ADAM10-mediated cleavage of CDH5. This chain is Tetraspanin-14 (Tspan14), found in Mus musculus (Mouse).